A 150-amino-acid chain; its full sequence is UPF0201 protein APE_1751 (150 aa).

This sequence belongs to the UPF0201 family.

This is UPF0201 protein APE_1751 from Aeropyrum pernix (strain ATCC 700893 / DSM 11879 / JCM 9820 / NBRC 100138 / K1).